The primary structure comprises 1165 residues: Protein hsr-9 (1165 aa).

Disordered stretches follow at residues 1 to 26 (MASS…PTTT), 70 to 578 (AEDE…TEME), 608 to 713 (KYSM…IPLK), and 874 to 913 (TRAR…EEEE). Low complexity predominate over residues 16 to 26 (TVTQTSLPTTT). Composition is skewed to basic and acidic residues over residues 98-114 (KDAK…KSES), 123-140 (TFEK…KLDI), and 149-162 (DTEK…KVVG). Composition is skewed to acidic residues over residues 163–179 (DEDE…DEDE), 211–230 (EKEE…EVEV), and 280–289 (GESEANEENQ). A compositionally biased stretch (polar residues) spans 306–317 (ATVSSTPSSNTP). Residues 397–408 (NTEHPTEEETPK) are compositionally biased toward basic and acidic residues. Residues 415-431 (SAASSSATSSAVPTPRS) show a composition bias toward low complexity. Basic and acidic residues predominate over residues 446-461 (LQEKETEDPTKTHDTN). Acidic residues predominate over residues 533–543 (DPIEEADETIE). A compositionally biased stretch (low complexity) spans 554-563 (AAKSAPSSSK). 2 stretches are compositionally biased toward basic and acidic residues: residues 662 to 671 (KKEEEHHEND) and 694 to 708 (SEAS…KKEP). The region spanning 923–1028 (IGKNIFTGKV…KCVDYTDYVL (106 aa)) is the BRCT domain.

Expressed in germ cells.

It localises to the nucleus. In terms of biological role, may have a role in DNA double-strand break repair following gamma-irradiation. The chain is Protein hsr-9 from Caenorhabditis elegans.